Reading from the N-terminus, the 512-residue chain is Protein spinster homolog 3 (512 aa).

The interval 1–30 (MAGGMSAECPEPGPGGLQGQSPGPGRQCPP) is disordered. 12 helical membrane-spanning segments follow: residues 50–70 (VLCY…GVLL), 84–104 (GLLQ…FGYL), 112–132 (ATMS…SFIS), 145–165 (IVGT…GDLF), 173–193 (VLAV…VLGS), 204–224 (WALR…ILLV), 260–280 (FVWS…LGFW), 309–329 (LIFG…GAEA), 343–365 (LICA…LAPT), 377–397 (GELL…SVVV), 411–431 (VGHI…SSVL), and 450–470 (FLCC…TALY). Residues 481-512 (PVTGTPDSNDVDSNDLERQGLLSGAGASTEEP) form a disordered region.

The protein belongs to the major facilitator superfamily. Spinster (TC 2.A.1.49) family.

Its subcellular location is the membrane. Functionally, sphingolipid transporter. This is Protein spinster homolog 3 (SPNS3) from Homo sapiens (Human).